We begin with the raw amino-acid sequence, 1091 residues long: Isoleucine--tRNA ligase (1091 aa).

The 'HIGH' region motif lies at 48 to 58 (PFATGLPHFGH). The 'KMSKS' region signature appears at 625 to 629 (KMSKA). Lysine 628 lines the ATP pocket.

This sequence belongs to the class-I aminoacyl-tRNA synthetase family. IleS type 2 subfamily. As to quaternary structure, monomer. Zn(2+) is required as a cofactor.

Its subcellular location is the cytoplasm. The enzyme catalyses tRNA(Ile) + L-isoleucine + ATP = L-isoleucyl-tRNA(Ile) + AMP + diphosphate. Functionally, catalyzes the attachment of isoleucine to tRNA(Ile). As IleRS can inadvertently accommodate and process structurally similar amino acids such as valine, to avoid such errors it has two additional distinct tRNA(Ile)-dependent editing activities. One activity is designated as 'pretransfer' editing and involves the hydrolysis of activated Val-AMP. The other activity is designated 'posttransfer' editing and involves deacylation of mischarged Val-tRNA(Ile). The protein is Isoleucine--tRNA ligase of Treponema pallidum (strain Nichols).